We begin with the raw amino-acid sequence, 505 residues long: Glucan endo-1,3-beta-glucosidase 2 (505 aa).

A signal peptide spans 1–20 (MASLLHLLLLSLSLLVLASA). N97 is a glycosylation site (N-linked (GlcNAc...) asparagine). E125 acts as the Proton donor in catalysis. N-linked (GlcNAc...) asparagine glycans are attached at residues N180 and N262. The Nucleophile role is filled by E272. N-linked (GlcNAc...) asparagine glycosylation is found at N304, N361, and N365. Cysteines 369 and 432 form a disulfide. Residues N461, N466, and N473 are each glycosylated (N-linked (GlcNAc...) asparagine). A lipid anchor (GPI-anchor amidated serine) is attached at S477. Positions 478-505 (SGIRSDLYYSRGIWSILTVMILNVANIL) are cleaved as a propeptide — removed in mature form.

Belongs to the glycosyl hydrolase 17 family. In terms of processing, contains two additional disulfide bonds.

It localises to the cell membrane. It carries out the reaction Hydrolysis of (1-&gt;3)-beta-D-glucosidic linkages in (1-&gt;3)-beta-D-glucans.. This chain is Glucan endo-1,3-beta-glucosidase 2, found in Arabidopsis thaliana (Mouse-ear cress).